We begin with the raw amino-acid sequence, 519 residues long: tRNA pseudouridine synthase Pus10 (519 aa).

The disordered stretch occupies residues 70–98; the sequence is NENEEIDENTKNNEDTENKADDKSQSNEE. Residues 77-98 show a composition bias toward basic and acidic residues; the sequence is ENTKNNEDTENKADDKSQSNEE. The THUMP domain maps to 144–265; that stretch reads NESEENESNI…NQKIYLQINP (122 aa). Residue Asp334 is the Nucleophile of the active site. 2 residues coordinate substrate: Tyr398 and Tyr476.

This sequence belongs to the pseudouridine synthase Pus10 family.

It carries out the reaction uridine(54) in tRNA = pseudouridine(54) in tRNA. The catalysed reaction is uridine(55) in tRNA = pseudouridine(55) in tRNA. In terms of biological role, responsible for synthesis of pseudouridine from uracil-54 and uracil-55 in the psi GC loop of transfer RNAs. This Methanococcus voltae (strain ATCC BAA-1334 / A3) protein is tRNA pseudouridine synthase Pus10.